The chain runs to 544 residues: uncharacterized protein (544 aa).

The first 34 residues, 1–34 (MIARRMLCARPWGPSCVVCALCGALAALVPAVGA), serve as a signal peptide directing secretion. Residues 38 to 69 (AVPAPGTPAPPAHTASEAVPPAPEPRAEGEQP) form a disordered region.

The protein belongs to the TP096X family.

This is an uncharacterized protein from Treponema pallidum (strain Nichols).